The primary structure comprises 161 residues: NADH-quinone oxidoreductase subunit C (161 aa).

It belongs to the complex I 30 kDa subunit family. NDH-1 is composed of 14 different subunits. Subunits NuoB, C, D, E, F, and G constitute the peripheral sector of the complex.

The protein localises to the cell inner membrane. It carries out the reaction a quinone + NADH + 5 H(+)(in) = a quinol + NAD(+) + 4 H(+)(out). In terms of biological role, NDH-1 shuttles electrons from NADH, via FMN and iron-sulfur (Fe-S) centers, to quinones in the respiratory chain. The immediate electron acceptor for the enzyme in this species is believed to be ubiquinone. Couples the redox reaction to proton translocation (for every two electrons transferred, four hydrogen ions are translocated across the cytoplasmic membrane), and thus conserves the redox energy in a proton gradient. This Citrifermentans bemidjiense (strain ATCC BAA-1014 / DSM 16622 / JCM 12645 / Bem) (Geobacter bemidjiensis) protein is NADH-quinone oxidoreductase subunit C.